Reading from the N-terminus, the 421-residue chain is Proton/sodium-glutamate symport protein (421 aa).

Residues 1–3 (MRK) are Cytoplasmic-facing. Residues 4–24 (IGLAWQIFIGLILGIIVGAIF) traverse the membrane as a helical segment. The Extracellular portion of the chain corresponds to 25–43 (YGNPKVATYLQPIGDIFLR). Residues 44–64 (LIKMIVIPIVISSLVVGVASV) traverse the membrane as a helical segment. Residues 65-77 (GDLKKLGKLGGKT) are Cytoplasmic-facing. The chain crosses the membrane as a helical span at residues 78–98 (IIYFEIITTIAIVVGLLAANI). Topologically, residues 99 to 148 (FQPGTGVNMKSLEKTDIQSYVDTTNEVQHHSMVETFVNIVPKNIFESLTK) are extracellular. A helical transmembrane segment spans residues 149-169 (GDMLPIIFFSVMFGLGVAAIG). Residues 170 to 198 (EKGKPVLQFFQGTAEAMFYVTNQIMKFAP) lie on the Cytoplasmic side of the membrane. Residues 199-219 (FGVFALIGVTVSKFGVESLIP) traverse the membrane as a helical segment. At 220-222 (LSK) the chain is on the extracellular side. The helical transmembrane segment at 223 to 243 (LVIVVYATMVFFIFVVLGGVA) threads the bilayer. Position 244 (lysine 244) is a topological domain, cytoplasmic. Residues 245 to 265 (LFGINIFHIIKILKDELILAY) traverse the membrane as a helical segment. The Extracellular segment spans residues 266–306 (STASSETVLPKIMEKMENFGCPKAITSFVIPTGYSFNLDGS). A helical membrane pass occupies residues 307-327 (TLYQALAAIFIAQLYGIDMPI). Over 328–330 (SQQ) the chain is Cytoplasmic. A run of 2 helical transmembrane segments spans residues 331 to 351 (ISLLLVLMVTSKGIAGVPGVS) and 352 to 372 (FVVLLATLGTVGIPIEGLAFI). The Cytoplasmic segment spans residues 373–421 (AGIDRILDMARTAVNVIGNSLAAIIMSKWEGQYNEEKGKQYIAQLQQSA).

Belongs to the dicarboxylate/amino acid:cation symporter (DAACS) (TC 2.A.23) family. In terms of assembly, homotrimer.

The protein localises to the cell membrane. Its function is as follows. This carrier protein is part of the Na(+)-dependent, binding-protein-independent glutamate-aspartate transport system. The sequence is that of Proton/sodium-glutamate symport protein (gltT) from Geobacillus stearothermophilus (Bacillus stearothermophilus).